The following is a 231-amino-acid chain: MSMVVRTLGRVDYLATVQAMQDYTARRGPQDPDLLWLCEHDRLYTQGLAGQDRHVLAPGDIPVLQSNRGGQVTFHGPGQVVAYPLIDLRRAGYYVKEYVYRIEEAVIRCLAQWGVTGHRVAGAPGIYVRPDDPGGHALLPLRPPKSPGTPAPAPDFQGLGKIAALGVKVSRHCSYHGVALNVAMDLEPFARINPCGYAGLRTVDLSTIGVRLRWDEAAQLLGRQLCIWLAP.

The BPL/LPL catalytic domain occupies 29–231 (PQDPDLLWLC…GRQLCIWLAP (203 aa)). Residues 68-75 (RGGQVTFH), 164-166 (ALG), and 177-179 (GVA) each bind substrate. The active-site Acyl-thioester intermediate is the C195.

The protein belongs to the LipB family.

It is found in the cytoplasm. The enzyme catalyses octanoyl-[ACP] + L-lysyl-[protein] = N(6)-octanoyl-L-lysyl-[protein] + holo-[ACP] + H(+). It functions in the pathway protein modification; protein lipoylation via endogenous pathway; protein N(6)-(lipoyl)lysine from octanoyl-[acyl-carrier-protein]: step 1/2. In terms of biological role, catalyzes the transfer of endogenously produced octanoic acid from octanoyl-acyl-carrier-protein onto the lipoyl domains of lipoate-dependent enzymes. Lipoyl-ACP can also act as a substrate although octanoyl-ACP is likely to be the physiological substrate. This is Octanoyltransferase from Verminephrobacter eiseniae (strain EF01-2).